Consider the following 443-residue polypeptide: MLPFASCLPGSLLLWALLLLLLGAASPQDSEEPDSYTECTDGYEWDADSQHCRDVNECLTIPEACKGEMKCINHYGGYLCLPRSAAVINDLHGEGPPPPVPPAQHPNPCPPGYEPDEQESCVDVDECAQALHDCRPSQDCHNLPGSYQCTCPDGYRKVGPECVDIDECRYRYCQHRCVNLPGSFRCQCEPGFQLGPNNRSCVDVNECDMGAPCEQRCFNSYGTFLCRCNQGYELHRDGFSCSDIDECSYSSYLCQYRCVNEPGRFSCHCPQGYQLLATRLCQDIDECETGAHQCSEAQTCVNFHGGYRCVDTNRCVEPYVQVSDNRCFCPVSNPLCREQPSSIVHRYMSITSERSVPADVFQIQATSVYPGAYNAFQIRAGNTQGDFYIRQINNVSAMLVLARPVTGPREYVLDLEMVTMNSLMSYRASSVLRLTVFVGAYTF.

An N-terminal signal peptide occupies residues 1–25; sequence MLPFASCLPGSLLLWALLLLLLGAA. The 46-residue stretch at 36–81 folds into the EGF-like 1; atypical domain; that stretch reads YTECTDGYEWDADSQHCRDVNECLTIPEACKGEMKCINHYGGYLCL. 18 disulfides stabilise this stretch: Cys-58–Cys-121, Cys-65–Cys-80, Cys-71–Cys-109, Cys-127–Cys-140, Cys-134–Cys-149, Cys-151–Cys-162, Cys-168–Cys-177, Cys-173–Cys-186, Cys-188–Cys-201, Cys-207–Cys-217, Cys-213–Cys-226, Cys-228–Cys-241, Cys-247–Cys-258, Cys-254–Cys-267, Cys-269–Cys-281, Cys-287–Cys-300, Cys-294–Cys-309, and Cys-315–Cys-327. The EGF-like 2; calcium-binding domain occupies 123 to 163; it reads DVDECAQALHDCRPSQDCHNLPGSYQCTCPDGYRKVGPECV. The EGF-like 3; calcium-binding domain occupies 164–202; that stretch reads DIDECRYRYCQHRCVNLPGSFRCQCEPGFQLGPNNRSCV. N-linked (GlcNAc...) asparagine glycosylation is present at Asn-198. The 40-residue stretch at 203–242 folds into the EGF-like 4; calcium-binding domain; the sequence is DVNECDMGAPCEQRCFNSYGTFLCRCNQGYELHRDGFSCS. The EGF-like 5; calcium-binding domain maps to 243-282; the sequence is DIDECSYSSYLCQYRCVNEPGRFSCHCPQGYQLLATRLCQ. The EGF-like 6; calcium-binding domain occupies 283-328; sequence DIDECETGAHQCSEAQTCVNFHGGYRCVDTNRCVEPYVQVSDNRCF. The N-linked (GlcNAc...) asparagine glycan is linked to Asn-394.

Belongs to the fibulin family. As to quaternary structure, homodimer; disulfide-linked. Multimer; allows heparin binding. Monomer. Interacts with FBN1 (via N-terminal domain); this interaction inhibits EFEMP2 binding to LOX and ELN. Interacts with LOX (via propeptide); this interaction is strong and facilitates formation of ternary complexes with ELN during elastic fiber assembly; this interaction limits interaction of EFEMP2 with FBLN5. Interacts with PITX2. Interacts with ELN with moderate affinity; this interaction regulates ELN self-assembly maturation stage. Interacts with FBLN5 with moderate affinity. Interacts with LOXL1 (via propeptide), LTBP1 and TGFB1 stronger than with LOXL2 and LTBP3. Interacts with PCOLCE. Interacts with collagen type IV trimer (COL4A1-COL4A1-COL4A2), NID2 and moderately with COL15A1-derived endostatin. Interacts with EMILIN1; this interaction promotes the incorporation of EFEMP2 into the extracellular matrix. Interacts with LTBP4; the LTBP4 long form (LTBP4L) has a stronger binding affinity than the LTBP4 short form and the LTBP4 long form promotes fibrillar deposition of EFEMP2. N-glycosylated; contains mostly complex-type glycans. Not O-glycosylated. Post-translationally, cleaved by ELANE; produces a 50-55 kDa fragment. Cleaved by MMP2 and MMP9; produces several fragments.

Its subcellular location is the secreted. It is found in the extracellular space. The protein resides in the extracellular matrix. It localises to the basement membrane. Its function is as follows. Plays a crucial role in elastic fiber formation in tissue, and in the formation of ultrastructural connections between elastic laminae and smooth muscle cells in the aorta, therefore participates in terminal differentiation and maturation of smooth muscle cell (SMC) and in the mechanical properties and wall integrity maintenance of the aorta. In addition, is involved in the control of collagen fibril assembly in tissue throught proteolytic activation of LOX leading to cross- linking of collagen and elastin. Also promotes ELN coacervation and participates in the deposition of ELN coacervates on to microfibrils but also regulates ELN cross- linking through LOX interaction. Moreover adheres to the cells through heparin binding in a calcium-dependent manner and regulates vascularlar smooth muscle cells proliferation through angiotensin signaling. This Cricetulus griseus (Chinese hamster) protein is EGF-containing fibulin-like extracellular matrix protein 2.